A 157-amino-acid chain; its full sequence is Small ribosomal subunit protein uS7 (157 aa).

Belongs to the universal ribosomal protein uS7 family. In terms of assembly, part of the 30S ribosomal subunit. Contacts proteins S9 and S11.

Its function is as follows. One of the primary rRNA binding proteins, it binds directly to 16S rRNA where it nucleates assembly of the head domain of the 30S subunit. Is located at the subunit interface close to the decoding center, probably blocks exit of the E-site tRNA. This chain is Small ribosomal subunit protein uS7, found in Akkermansia muciniphila (strain ATCC BAA-835 / DSM 22959 / JCM 33894 / BCRC 81048 / CCUG 64013 / CIP 107961 / Muc).